The primary structure comprises 490 residues: 5-hydroxytryptamine receptor 3A (490 aa).

The N-terminal stretch at 1 to 19 (MVLWLQLALLALLLPTSLA) is a signal peptide. The Extracellular segment spans residues 20-249 (QGEVRGKGTA…FYVVIRRRPL (230 aa)). Residues Asn33, Asn109, Asn175, and Asn191 are each glycosylated (N-linked (GlcNAc...) asparagine). Cys162 and Cys176 are oxidised to a cystine. A helical membrane pass occupies residues 250-270 (FYAVTLLLPSIFLMIVDIVGF). Residues 271–285 (YLPPDSGERVSFKIT) are Cytoplasmic-facing. The helical transmembrane segment at 286–306 (LLLGYSVFLIIVSDTLPATAI) threads the bilayer. The Extracellular segment spans residues 307–312 (GTPLIS). The helical transmembrane segment at 313–333 (VYFVVCMALLVISLAETILIV) threads the bilayer. Residues 334–467 (RLVHKQDLQQ…GSVLDKLLFR (134 aa)) lie on the Cytoplasmic side of the membrane. A disordered region spans residues 401 to 422 (GGPQDLEKTSRGRGSPPPPPRE). The interval 426–462 (AMCGLLQELASIRHFLEKREETREVARDWLRVGSVLD) is HA-stretch; determines single-channel conductance in 5-HT3 receptors. Residues 468–488 (VYLLAVLAYSITLVTLWSVWH) traverse the membrane as a helical segment. Over 489–490 (YA) the chain is Extracellular.

Belongs to the ligand-gated ion channel (TC 1.A.9) family. 5-hydroxytryptamine receptor (TC 1.A.9.2) subfamily. HTR3A sub-subfamily. In terms of assembly, forms homopentameric as well as heteropentameric serotonin-activated cation-selective channel complexes with HTR3B or HTR3C or HTR3D or HTR3E. The homomeric complex is functional but exhibits low conductance with modified voltage dependence, and decreased agonist and antagonist affinity. Heteropentameric complexes display properties which resemble that of neuronal serotonin-activated channels in vivo. Interacts with RIC3. Expressed in cortex, intestine and liver. Not expressed in muscle or spleen.

The protein localises to the postsynaptic cell membrane. It is found in the cell membrane. The enzyme catalyses Na(+)(in) = Na(+)(out). The catalysed reaction is K(+)(in) = K(+)(out). It catalyses the reaction Ca(2+)(in) = Ca(2+)(out). It carries out the reaction Mg(2+)(in) = Mg(2+)(out). Forms serotonin (5-hydroxytryptamine/5-HT3)-activated cation-selective channel complexes, which when activated cause fast, depolarizing responses in neurons. This is 5-hydroxytryptamine receptor 3A from Cavia porcellus (Guinea pig).